Here is a 110-residue protein sequence, read N- to C-terminus: Pathogenesis-related protein (110 aa).

Positions 1–19 are cleaved as a signal peptide; the sequence is AFLLAATLTISSHMQEAGA.

It belongs to the thaumatin family.

The sequence is that of Pathogenesis-related protein from Juniperus virginiana (Eastern redcedar).